The following is a 222-amino-acid chain: Pleckstrin homology domain-containing family B member 2 (222 aa).

One can recognise a PH domain in the interval 2–109; sequence AFVKSGWLLR…WKFTLQDSRT (108 aa). Residue Lys-20 participates in a 1,2-diacyl-sn-glycero-3-phospho-L-serine binding.

Its subcellular location is the recycling endosome membrane. Its function is as follows. Involved in retrograde transport of recycling endosomes. The protein is Pleckstrin homology domain-containing family B member 2 (PLEKHB2) of Homo sapiens (Human).